Here is a 321-residue protein sequence, read N- to C-terminus: Sphingolipid delta(4)-desaturase DES1 (321 aa).

Helical transmembrane passes span 41–61, 68–88, 107–127, 157–177, 187–206, and 208–230; these read PNFKWVAGAMVLTQILALFVV, WLIVAAYCFGGIINHSLMLAV, ILGFICNLPIGLPMSISFKKY, FGKFLWVCLQPFFYIFRPLII, IINTVVQLTFNALIVYFLGW, and PLAYLLIGSILAMGLHPVAGHFI.

The protein belongs to the fatty acid desaturase type 1 family. DEGS subfamily. Testes.

The protein resides in the endoplasmic reticulum membrane. It is found in the membrane. The protein localises to the mitochondrion. It carries out the reaction an N-acylsphinganine + 2 Fe(II)-[cytochrome b5] + O2 + 2 H(+) = an N-acylsphing-4-enine + 2 Fe(III)-[cytochrome b5] + 2 H2O. The enzyme catalyses an N-acyleicosasphinganine + 2 Fe(II)-[cytochrome b5] + O2 + 2 H(+) = an N-acyleicosasphing-4-enine + 2 Fe(III)-[cytochrome b5] + 2 H2O. It functions in the pathway sphingolipid metabolism. Its function is as follows. Has sphingolipid-delta-4-desaturase activity. Converts sphinganine-containing sphingolipids (such as N-acylsphinganines or dihydroceramides) into sphingolipids containing the delta-4-desaturated sphingoid base (E)-sphing-4-enine (such as N-acylsphing-4-enines or ceramides), which are required for many different functions (structural functions as well as signaling). Required to initiate spermatid differentiation among other signals. Required for central spindle assembly and cytokinesis during male meiosis, may act as part of an anchoring mechanism that links membrane-bounded cellular compartments to components of the cytoskeleton. The polypeptide is Sphingolipid delta(4)-desaturase DES1 (Drosophila melanogaster (Fruit fly)).